We begin with the raw amino-acid sequence, 493 residues long: Ribonuclease Y (493 aa).

A helical membrane pass occupies residues 19–39 (IFAILFLIIVILNLGLLVFLA). One can recognise a KH domain in the interval 172-241 (SASFTVIESD…LTIRNILIND (70 aa)). Residues 300 to 392 (VLSHCLETGF…TQIGDKLSAG (93 aa)) enclose the HD domain.

The protein belongs to the RNase Y family.

The protein localises to the cell membrane. Its function is as follows. Endoribonuclease that initiates mRNA decay. The protein is Ribonuclease Y of Mycoplasma pneumoniae (strain ATCC 29342 / M129 / Subtype 1) (Mycoplasmoides pneumoniae).